The sequence spans 561 residues: Small ribosomal subunit protein bS1 (561 aa).

6 consecutive S1 motif domains span residues 22–88, 106–172, 193–261, 278–348, 365–435, and 452–521; these read GEVI…LSRE, GDIL…VSRR, GSVI…LGMK, GTRL…LGMK, GDKI…LGIK, and GSLV…LSVK.

The protein belongs to the bacterial ribosomal protein bS1 family.

Functionally, binds mRNA; thus facilitating recognition of the initiation point. It is needed to translate mRNA with a short Shine-Dalgarno (SD) purine-rich sequence. This chain is Small ribosomal subunit protein bS1 (rpsA), found in Neisseria meningitidis serogroup B (strain ATCC BAA-335 / MC58).